A 1080-amino-acid chain; its full sequence is Ubiquitin-activating enzyme E1 1 (1080 aa).

Over residues methionine 1–aspartate 14 the composition is skewed to basic and acidic residues. 2 disordered regions span residues methionine 1–serine 20 and arginine 29–arginine 50. Positions aspartate 38–serine 49 are enriched in low complexity. ATP is bound by residues alanine 502, aspartate 528, arginine 539, lysine 552, and aspartate 600–asparagine 601. Cysteine 656 serves as the catalytic Glycyl thioester intermediate.

Belongs to the ubiquitin-activating E1 family. In terms of assembly, monomer. As to expression, expressed in leaves, flowers, roots and stems. Detected in germinating seeds, cotyledons, hypocotyls, vascular tissues, anthers, filaments, pollen, style, stigma, sepals, petals, ovary, developing ovules, funiculi and silique walls.

The enzyme catalyses ATP + ubiquitin + [E1 ubiquitin-activating enzyme]-L-cysteine = AMP + diphosphate + S-ubiquitinyl-[E1 ubiquitin-activating enzyme]-L-cysteine.. The protein operates within protein modification; protein ubiquitination. In terms of biological role, activates ubiquitin by first adenylating its C-terminal glycine residue with ATP, and thereafter linking this residue to the side chain of a cysteine residue in E1, yielding a ubiquitin-E1 thioester and free AMP. The chain is Ubiquitin-activating enzyme E1 1 (UBA1) from Arabidopsis thaliana (Mouse-ear cress).